A 224-amino-acid polypeptide reads, in one-letter code: LexA repressor (224 aa).

Residues 31–51 constitute a DNA-binding region (H-T-H motif); it reads RAEIATELGFRSANAAEEHLQ. Catalysis depends on for autocatalytic cleavage activity residues S142 and K179.

Belongs to the peptidase S24 family. As to quaternary structure, homodimer.

It carries out the reaction Hydrolysis of Ala-|-Gly bond in repressor LexA.. Its function is as follows. Represses a number of genes involved in the response to DNA damage (SOS response), including recA and lexA. In the presence of single-stranded DNA, RecA interacts with LexA causing an autocatalytic cleavage which disrupts the DNA-binding part of LexA, leading to derepression of the SOS regulon and eventually DNA repair. This is LexA repressor from Albidiferax ferrireducens (strain ATCC BAA-621 / DSM 15236 / T118) (Rhodoferax ferrireducens).